A 547-amino-acid chain; its full sequence is Ribosome protection protein VmlR (547 aa).

The ABC transporter 1 domain maps to 5-200 (VTLTNVSYEV…FREKKRLTQQ (196 aa)). Residue 37 to 44 (GKNGAGKS) coordinates ATP. The segment at 183 to 289 (GNYSGYMKFR…SIDTTHKTGK (107 aa)) is antibiotic resistance domain (ARD). 2 coiled-coil regions span residues 193–222 (EKKRLTQQREYEKQQKMVERIEAQMNGLAS) and 245–269 (AKRTDAQIKSKQKRLEKELEKAKAE). In terms of domain architecture, ABC transporter 2 spans 292–504 (LEVQNVTKAF…REELRLKLET (213 aa)). 324 to 331 (GPNGSGKT) lines the ATP pocket. The segment at 483 to 547 (KQLNDVPSER…KELDHQDKKD (65 aa)) is C-terminal extension (CTE). Residues 488–543 (VPSERNEREELRLKLETERQEVLGKLSFMTPNDKGYKELDQAFNELTKRIKELDHQ) are a coiled coil.

This sequence belongs to the ABC transporter superfamily. ABCF family. ARE2 subfamily. Binds within the E-site of the 70S ribosome, where it contacts ribosomal proteins L1, L5, L33-1, S7, S11, the 16 and 23S rRNAs and the acceptor arm of the P-site tRNA.

It is found in the cytoplasm. Recognizes and binds in the vacant E-site of ribosomes stalled by some peptidyltransferase center (PTC)-targeting antibiotics. Makes contact with the PTC and both ribosomal subunits. Induces conformational changes in the P-site, which allows it to dislodge the antibiotic from its PTC binding site. Binds to ribosomes either directly following translation initation or subsequent to E tRNA release during elongation. Involved in resistance to a narrow spectrum of antibiotics (the streptogramin A antibiotic virginiamycin M, the lincosamide antibiotic lincomycin and the pleuromutilin antibiotic tiamulin). The sequence is that of Ribosome protection protein VmlR from Bacillus subtilis (strain 168).